Consider the following 172-residue polypeptide: Large ribosomal subunit protein uL10 (172 aa).

It belongs to the universal ribosomal protein uL10 family. In terms of assembly, part of the ribosomal stalk of the 50S ribosomal subunit. The N-terminus interacts with L11 and the large rRNA to form the base of the stalk. The C-terminus forms an elongated spine to which L12 dimers bind in a sequential fashion forming a multimeric L10(L12)X complex.

In terms of biological role, forms part of the ribosomal stalk, playing a central role in the interaction of the ribosome with GTP-bound translation factors. The polypeptide is Large ribosomal subunit protein uL10 (Methylorubrum extorquens (strain CM4 / NCIMB 13688) (Methylobacterium extorquens)).